The chain runs to 1595 residues: Pentafunctional AROM polypeptide (1595 aa).

Positions 1–384 (MGVPTKISIL…HEPRASTVSN (384 aa)) are 3-dehydroquinate synthase. Residues 44 to 46 (DTN), 81 to 84 (ESSK), 114 to 116 (GGV), and Asp119 each bind NAD(+). A 7-phospho-2-dehydro-3-deoxy-D-arabino-heptonate-binding site is contributed by Arg130. 139–140 (TT) contributes to the NAD(+) binding site. Residues Asp146 and Lys152 each coordinate 7-phospho-2-dehydro-3-deoxy-D-arabino-heptonate. An NAD(+)-binding site is contributed by Lys161. A 7-phospho-2-dehydro-3-deoxy-D-arabino-heptonate-binding site is contributed by Asn162. Residues 179 to 182 (FLNT) and Asn190 contribute to the NAD(+) site. Zn(2+) is bound at residue Glu194. 7-phospho-2-dehydro-3-deoxy-D-arabino-heptonate is bound by residues 194 to 197 (EVIK) and Lys250. The active-site Proton acceptor; for 3-dehydroquinate synthase activity is Glu260. Residues 264-268 (RNLLN) and His271 each bind 7-phospho-2-dehydro-3-deoxy-D-arabino-heptonate. Position 271 (His271) interacts with Zn(2+). His275 serves as the catalytic Proton acceptor; for 3-dehydroquinate synthase activity. Residues His287 and Lys356 each contribute to the 7-phospho-2-dehydro-3-deoxy-D-arabino-heptonate site. His287 is a binding site for Zn(2+). Positions 397–842 (VSPGVPKGLD…WDSLAQTFKV (446 aa)) are EPSP synthase. The active-site For EPSP synthase activity is the Cys824. Residues 866 to 1057 (ASIFIIGMRG…RRKENTFFVS (192 aa)) form a shikimate kinase region. 872–879 (GMRGAGKT) is an ATP binding site. A 3-dehydroquinase region spans residues 1058–1278 (LTLPDLGLAA…AAPGQLSARE (221 aa)). His1181 (proton acceptor; for 3-dehydroquinate dehydratase activity) is an active-site residue. The Schiff-base intermediate with substrate; for 3-dehydroquinate dehydratase activity role is filled by Lys1209. The interval 1291–1595 (AKKFAVIGNP…MGVLPSEDIS (305 aa)) is shikimate dehydrogenase.

It in the N-terminal section; belongs to the sugar phosphate cyclases superfamily. Dehydroquinate synthase family. This sequence in the 2nd section; belongs to the EPSP synthase family. In the 3rd section; belongs to the shikimate kinase family. The protein in the 4th section; belongs to the type-I 3-dehydroquinase family. It in the C-terminal section; belongs to the shikimate dehydrogenase family. In terms of assembly, homodimer. The cofactor is Zn(2+).

The protein resides in the cytoplasm. It catalyses the reaction 7-phospho-2-dehydro-3-deoxy-D-arabino-heptonate = 3-dehydroquinate + phosphate. The enzyme catalyses 3-dehydroquinate = 3-dehydroshikimate + H2O. The catalysed reaction is shikimate + NADP(+) = 3-dehydroshikimate + NADPH + H(+). It carries out the reaction shikimate + ATP = 3-phosphoshikimate + ADP + H(+). It catalyses the reaction 3-phosphoshikimate + phosphoenolpyruvate = 5-O-(1-carboxyvinyl)-3-phosphoshikimate + phosphate. The protein operates within metabolic intermediate biosynthesis; chorismate biosynthesis; chorismate from D-erythrose 4-phosphate and phosphoenolpyruvate: step 2/7. It participates in metabolic intermediate biosynthesis; chorismate biosynthesis; chorismate from D-erythrose 4-phosphate and phosphoenolpyruvate: step 3/7. It functions in the pathway metabolic intermediate biosynthesis; chorismate biosynthesis; chorismate from D-erythrose 4-phosphate and phosphoenolpyruvate: step 4/7. Its pathway is metabolic intermediate biosynthesis; chorismate biosynthesis; chorismate from D-erythrose 4-phosphate and phosphoenolpyruvate: step 5/7. The protein operates within metabolic intermediate biosynthesis; chorismate biosynthesis; chorismate from D-erythrose 4-phosphate and phosphoenolpyruvate: step 6/7. In terms of biological role, the AROM polypeptide catalyzes 5 consecutive enzymatic reactions in prechorismate polyaromatic amino acid biosynthesis. This Ajellomyces capsulatus (strain H143) (Darling's disease fungus) protein is Pentafunctional AROM polypeptide.